A 526-amino-acid polypeptide reads, in one-letter code: Delayed-rectifier potassium channel regulatory subunit KCNS1 (526 aa).

Over methionine 1–leucine 217 the chain is Cytoplasmic. A helical membrane pass occupies residues proline 218 to isoleucine 239. Over histidine 240 to proline 270 the chain is Extracellular. Residues valine 271–leucine 293 form a helical membrane-spanning segment. Residues alanine 294–proline 304 lie on the Cytoplasmic side of the membrane. The helical transmembrane segment at leucine 305 to alanine 322 threads the bilayer. Residues glycine 323–leucine 337 are Extracellular-facing. A helical; Voltage-sensor transmembrane segment spans residues glycine 338 to histidine 358. At serine 359–tyrosine 373 the chain is on the cytoplasmic side. A helical membrane pass occupies residues arginine 374–tyrosine 395. Over threonine 396–isoleucine 408 the chain is Extracellular. An intramembrane region (helical) is located at residues proline 409–threonine 420. Residues threonine 421–aspartate 426 carry the Selectivity filter motif. Residues threonine 421–valine 428 lie within the membrane without spanning it. At proline 429–lysine 435 the chain is on the extracellular side. A helical membrane pass occupies residues leucine 436–tyrosine 464. The Cytoplasmic portion of the chain corresponds to arginine 465–tyrosine 526. The disordered stretch occupies residues glycine 491–tyrosine 526. A compositionally biased stretch (basic and acidic residues) spans threonine 499–aspartate 511.

The protein belongs to the potassium channel family. S (TC 1.A.1.2) subfamily. Kv9.1/KCNS1 sub-subfamily. As to quaternary structure, heterotetramer with KCNB1. Heterotetramer with KCNB2. Does not form homomultimers.

Its subcellular location is the cell membrane. In terms of biological role, potassium channel regulatory subunit that modulate the delayed rectifier voltage-gated potassium channel activity of KCNB1 and KCNB2 by altering their kinetics, expression levels, and shifting the half-inactivation potential to more polarized values. While it does not form functional channels on its own, it can form functional heterotetrameric channels with KCNB1 and KCNB2. Each regulatory subunit has unique regulatory properties that can lead to extensive inhibition, significant changes in kinetics, and/or substantial shifts in the voltage dependencies of the inactivation process. The sequence is that of Delayed-rectifier potassium channel regulatory subunit KCNS1 from Pan troglodytes (Chimpanzee).